The chain runs to 222 residues: Probable elongation factor 1-beta (222 aa).

The disordered stretch occupies residues 90 to 111; that stretch reads KPAADDDDDVDLFGSDDEEDEE. Residues 94 to 111 show a composition bias toward acidic residues; the sequence is DDDDDVDLFGSDDEEDEE. Phosphoserine is present on Ser-104.

It belongs to the EF-1-beta/EF-1-delta family. As to quaternary structure, EF-1 is composed of 4 subunits: alpha, beta, beta' and gamma. In terms of processing, phosphorylation affects the GDP/GTP exchange rate.

In terms of biological role, EF-1-beta and EF-1-delta stimulate the exchange of GDP bound to EF-1-alpha to GTP. This Drosophila melanogaster (Fruit fly) protein is Probable elongation factor 1-beta.